The primary structure comprises 42 residues: Alpha-conotoxin VnIB (42 aa).

The propeptide occupies 1–22; the sequence is ASDGRNAAADDKASDPIALTVR. Intrachain disulfides connect Cys-25/Cys-31 and Cys-26/Cys-38. A Glycine amide modification is found at Gly-39.

Belongs to the conotoxin A superfamily. In terms of tissue distribution, expressed by the venom duct.

Its subcellular location is the secreted. Its function is as follows. Alpha-conotoxins act on postsynaptic membranes, they bind to the nicotinic acetylcholine receptors (nAChR) and thus inhibit them. This toxin potently and selectively inhibits human and rat alpha-6-beta-4/CHRNA6-CHRNB4 nAChR (IC(50)=12 nM on rat nAChR). It exhibits rapid binding and unbinding at this receptor. It also shows activity on rat alpha-6-beta-4/CHRNA6-CHRNB4 (IC(50)=12 nM), human alpha-6/alpha-3-beta-4 (CHRNA6/CHRNA3-CHRNB4) (IC(50)=5.3 nM), rat alpha-6/alpha-3-beta-4 (CHRNA6/CHRNA3-CHRNB4) (IC(50)=18 nM), rat alpha-3-beta-4/CHRNA3-CHRNB4 (IC(50)=320 nM), and rat alpha-6/alpha-3-beta-2-beta-3 (CHRNA6/CHRNA3-CHRNB2-CHRNB3) (IC(50)=4 uM). This is Alpha-conotoxin VnIB from Conus ventricosus (Mediterranean cone).